Consider the following 399-residue polypeptide: Phosphoglycerate kinase (399 aa).

Substrate is bound by residues 22-24 (DFN), Arg38, 61-64 (HLGR), Arg119, and Arg152. ATP contacts are provided by residues Lys205, Gly296, Glu327, and 353-356 (GGDT).

The protein belongs to the phosphoglycerate kinase family. As to quaternary structure, monomer.

The protein resides in the cytoplasm. The catalysed reaction is (2R)-3-phosphoglycerate + ATP = (2R)-3-phospho-glyceroyl phosphate + ADP. It functions in the pathway carbohydrate degradation; glycolysis; pyruvate from D-glyceraldehyde 3-phosphate: step 2/5. The chain is Phosphoglycerate kinase from Nitratiruptor sp. (strain SB155-2).